A 147-amino-acid polypeptide reads, in one-letter code: MFNMNINSPVRFVKETNRAKSPTRQSPYAAGYDLYSAYDYTIPPGERQLIKTDISMSMPKFCYGRIAPRSGLSLKGIDIGGGVIDEDYRGNIGVILINNGKYTFNVNTGDRIAQLIYQRIYYPELKEVQSLDSTDRGDQGFGSTGLR.

Position 24 (R24) interacts with Mg(2+). DUTP-binding positions include 68-70 (PRS), 82-85 (GVID), Y88, G93, I95, and R111.

It belongs to the dUTPase family. Requires Mg(2+) as cofactor.

The enzyme catalyses dUTP + H2O = dUMP + diphosphate + H(+). Its function is as follows. This enzyme is involved in nucleotide metabolism: it produces dUMP, the immediate precursor of thymidine nucleotides and it decreases the intracellular concentration of dUTP so that uracil cannot be incorporated into DNA. The polypeptide is Deoxyuridine 5'-triphosphate nucleotidohydrolase (OPG046) (Homo sapiens (Human)).